The chain runs to 255 residues: uncharacterized protein (255 aa).

One can recognise an HTH deoR-type domain in the interval 3 to 58 (PVERRQIILEMVAEKGIVSIAELTDRMNVSHMTIRRDLQKLEQQGAVVLVSGGVQS). Positions 20–39 (VSIAELTDRMNVSHMTIRRD) form a DNA-binding region, H-T-H motif.

This is an uncharacterized protein from Escherichia coli (strain K12).